The primary structure comprises 959 residues: Autophagy-related protein 18g (959 aa).

WD repeat units lie at residues 376–416 (AHTS…SHNA) and 438–479 (ITSA…AAFQ). The segment at 802–832 (GSIESAESSEEGSTKQMENLHDSDHMSNSIK) is disordered.

The protein belongs to the WD repeat PROPPIN family. Component of the PI(3,5)P2 regulatory complex at least composed of ATG18, SAC/FIG4, FAB1 and VAC14. In terms of tissue distribution, expressed in leaves.

The protein localises to the preautophagosomal structure membrane. It localises to the vacuole membrane. Functionally, the PI(3,5)P2 regulatory complex regulates both the synthesis and turnover of phosphatidylinositol 3,5-bisphosphate (PtdIns(3,5)P2). Required for autophagy. This Arabidopsis thaliana (Mouse-ear cress) protein is Autophagy-related protein 18g (ATG18G).